The sequence spans 373 residues: 4-hydroxy-3-methylbut-2-en-1-yl diphosphate synthase (flavodoxin) (373 aa).

Positions 270, 273, 305, and 312 each coordinate [4Fe-4S] cluster.

It belongs to the IspG family. The cofactor is [4Fe-4S] cluster.

The enzyme catalyses (2E)-4-hydroxy-3-methylbut-2-enyl diphosphate + oxidized [flavodoxin] + H2O + 2 H(+) = 2-C-methyl-D-erythritol 2,4-cyclic diphosphate + reduced [flavodoxin]. It functions in the pathway isoprenoid biosynthesis; isopentenyl diphosphate biosynthesis via DXP pathway; isopentenyl diphosphate from 1-deoxy-D-xylulose 5-phosphate: step 5/6. Converts 2C-methyl-D-erythritol 2,4-cyclodiphosphate (ME-2,4cPP) into 1-hydroxy-2-methyl-2-(E)-butenyl 4-diphosphate. The chain is 4-hydroxy-3-methylbut-2-en-1-yl diphosphate synthase (flavodoxin) from Serratia proteamaculans (strain 568).